Here is a 242-residue protein sequence, read N- to C-terminus: Copper transport protein B (242 aa).

2 helical membrane passes run 8 to 28 and 86 to 106; these read ICLC…ACVL and ITGP…TAGY. Residues 153–175 form a disordered region; that stretch reads ESATTNVPSSQTPNESSPLVAGR. A compositionally biased stretch (polar residues) spans 154-169; the sequence is SATTNVPSSQTPNESS. 2 consecutive transmembrane segments (helical) span residues 187-207 and 210-230; these read IILA…MLLF and YNGF…LVFG.

Belongs to the copper transporter (Ctr) (TC 1.A.56) family. SLC31A subfamily.

Its subcellular location is the membrane. Transporter that is probably involved in the transport of copper, even if it does not act as a major copper transporter. The polypeptide is Copper transport protein B (Aspergillus fumigatus (strain ATCC MYA-4609 / CBS 101355 / FGSC A1100 / Af293) (Neosartorya fumigata)).